A 429-amino-acid polypeptide reads, in one-letter code: MNKPEIMTQTDIAGPAPRHQTTKVMVGNVAVGGGAPIVVQSMTNTDTADVESTVAQVAALARAGSEMVRITVDREEAAAAVPHIREQLDKRGITTPLIGDFHYIGHKLLTDYPACAEALAKYRINPGNVGFKDKRDTQFSTIIELANKYGKPVRIGANWGSLDQELLSKLMDENAASATPRDARAVTREAMVQSALLSAARAQELGMPKDRIILSAKVSAVQDLIAVYQDLAARSDYAIHLGLTEAGMGSKGIVASSAALGILLQQGIGDTIRISLTPEPGGDRTLEVQVAQELLQTMGFRTFVPLVAACPGCGRTTSTTFQELARSIQDFIREEMPAWKSKYPGVENLNVAVMGCIVNGPGESKHANIGISLPGTGEAPAAPVFVDGKKFRTLRGPTIAADFKALVIDYIDQRYGSGAKAPESVTAAE.

Positions 310, 313, 356, and 363 each coordinate [4Fe-4S] cluster.

It belongs to the IspG family. Requires [4Fe-4S] cluster as cofactor.

It catalyses the reaction (2E)-4-hydroxy-3-methylbut-2-enyl diphosphate + oxidized [flavodoxin] + H2O + 2 H(+) = 2-C-methyl-D-erythritol 2,4-cyclic diphosphate + reduced [flavodoxin]. It participates in isoprenoid biosynthesis; isopentenyl diphosphate biosynthesis via DXP pathway; isopentenyl diphosphate from 1-deoxy-D-xylulose 5-phosphate: step 5/6. Converts 2C-methyl-D-erythritol 2,4-cyclodiphosphate (ME-2,4cPP) into 1-hydroxy-2-methyl-2-(E)-butenyl 4-diphosphate. This Bradyrhizobium sp. (strain BTAi1 / ATCC BAA-1182) protein is 4-hydroxy-3-methylbut-2-en-1-yl diphosphate synthase (flavodoxin).